We begin with the raw amino-acid sequence, 225 residues long: MKLSAEMKAFEARLGYSFERPELLVRALTHGSISSSTRQDNQRLEFLGDRVLGLVMATALLEADKDATEGQLAPRFNALVRKETCAEVAREADLGAVLKLGRSEMMSGGRRKLALLGDAMEAVIAAVYRDGGFAAAEAVILRLWGARVHQVEADARDAKTALQEWAQARGQTPPRYELVKRSGPDHAPVFTILAELADGRRAEATAGAKRQAEQAAARKLLDSLD.

An RNase III domain is found at 7–132 (MKAFEARLGY…VIAAVYRDGG (126 aa)). E45 serves as a coordination point for Mg(2+). Residue D49 is part of the active site. Mg(2+) is bound by residues D118 and E121. The active site involves E121. The DRBM domain maps to 157-225 (DAKTALQEWA…AARKLLDSLD (69 aa)).

This sequence belongs to the ribonuclease III family. Homodimer. Requires Mg(2+) as cofactor.

It localises to the cytoplasm. It carries out the reaction Endonucleolytic cleavage to 5'-phosphomonoester.. Its function is as follows. Digests double-stranded RNA. Involved in the processing of primary rRNA transcript to yield the immediate precursors to the large and small rRNAs (23S and 16S). Processes some mRNAs, and tRNAs when they are encoded in the rRNA operon. Processes pre-crRNA and tracrRNA of type II CRISPR loci if present in the organism. This is Ribonuclease 3 from Ruegeria pomeroyi (strain ATCC 700808 / DSM 15171 / DSS-3) (Silicibacter pomeroyi).